Here is a 650-residue protein sequence, read N- to C-terminus: Putative polypeptide N-acetylgalactosaminyltransferase 9 (650 aa).

Over 1–11 (MAFIWRRRSTT) the chain is Cytoplasmic. Residues 12–31 (IVKLVAFALAIWFCIAFLVY) form a helical; Signal-anchor for type II membrane protein membrane-spanning segment. Residues 32–650 (TDDTRRRAAQ…TLENYDSSKL (619 aa)) lie on the Lumenal side of the membrane. The tract at residues 84 to 154 (NVIGGGGQKQ…NPGELGKPVR (71 aa)) is disordered. Residues 107–136 (HKADLQAERMRKKAAEQPKKKPQEDSKKVI) are compositionally biased toward basic and acidic residues. 5 disulfide bridges follow: Cys-198–Cys-432, Cys-423–Cys-499, Cys-535–Cys-554, Cys-577–Cys-590, and Cys-616–Cys-631. Positions 208–317 (LPKTDVIICF…EGWLEPLLDR (110 aa)) are catalytic subdomain A. Residues Cys-216, Asp-249, and Arg-278 each contribute to the substrate site. Asp-301 is a Mn(2+) binding site. Substrate is bound by residues Ser-302 and His-303. Residue His-303 coordinates Mn(2+). N-linked (GlcNAc...) asparagine glycans are attached at residues Asn-321 and Asn-373. Residues 378–440 (PVYSPTMAGG…PCSHVGHIFR (63 aa)) form a catalytic subdomain B region. His-437 serves as a coordination point for Mn(2+). Residues Arg-440 and Tyr-445 each coordinate substrate. One can recognise a Ricin B-type lectin domain in the interval 521-643 (AHGEIRNLGY…SLSRQQWTLE (123 aa)).

This sequence belongs to the glycosyltransferase 2 family. GalNAc-T subfamily. Isoform A forms homotetramer. Isoform B forms homodimer. Requires Mn(2+) as cofactor.

The protein resides in the golgi apparatus membrane. It carries out the reaction L-seryl-[protein] + UDP-N-acetyl-alpha-D-galactosamine = a 3-O-[N-acetyl-alpha-D-galactosaminyl]-L-seryl-[protein] + UDP + H(+). The catalysed reaction is L-threonyl-[protein] + UDP-N-acetyl-alpha-D-galactosamine = a 3-O-[N-acetyl-alpha-D-galactosaminyl]-L-threonyl-[protein] + UDP + H(+). It functions in the pathway protein modification; protein glycosylation. Functionally, catalyzes the initial reaction in O-linked oligosaccharide biosynthesis, the transfer of an N-acetyl-D-galactosamine residue to a serine or threonine residue on the protein receptor. It can both act as a peptide transferase that transfers GalNAc onto unmodified peptide substrates, and as a glycopeptide transferase that requires the prior addition of a GalNAc on a peptide before adding additional GalNAc moieties. Its function is as follows. N-acetylgalactosaminyltransferase which preferentially O-glycosylates negatively charge substrates. O-glycosylates mucin-like protein Sgs3 in the salivary gland but to a lesser extent than isoform B. By regulating the O-glycosylation of secretory cargo proteins plays a role in the morphology and maturation of salivary gland secretory granules. N-acetylgalactosaminyltransferase which preferentially O-glycosylates positively charge substrates. O-glycosylates mucin-like protein Sgs3 in the salivary gland. By regulating the O-glycosylation of secretory cargo proteins, plays a role in the morphology and maturation of salivary gland secretory granules. The protein is Putative polypeptide N-acetylgalactosaminyltransferase 9 of Drosophila melanogaster (Fruit fly).